The primary structure comprises 65 residues: MPKIGPMEILIIVLLVVVVFGVGKLPQVGDAIGKGIRNFRKASTGEDAKEEVETKEETKPAEKSE.

The helical transmembrane segment at Ile9–Gly29 threads the bilayer. Residues Arg40–Glu65 are disordered. Residues Ser43–Glu65 are compositionally biased toward basic and acidic residues.

It belongs to the TatA/E family. In terms of assembly, forms a complex with TatC.

It localises to the cell membrane. Functionally, part of the twin-arginine translocation (Tat) system that transports large folded proteins containing a characteristic twin-arginine motif in their signal peptide across membranes. TatA could form the protein-conducting channel of the Tat system. The polypeptide is Sec-independent protein translocase protein TatA (Dehalococcoides mccartyi (strain ATCC BAA-2100 / JCM 16839 / KCTC 5957 / BAV1)).